We begin with the raw amino-acid sequence, 361 residues long: S-adenosylmethionine:tRNA ribosyltransferase-isomerase (361 aa).

This sequence belongs to the QueA family. In terms of assembly, monomer.

Its subcellular location is the cytoplasm. It catalyses the reaction 7-aminomethyl-7-carbaguanosine(34) in tRNA + S-adenosyl-L-methionine = epoxyqueuosine(34) in tRNA + adenine + L-methionine + 2 H(+). The protein operates within tRNA modification; tRNA-queuosine biosynthesis. Functionally, transfers and isomerizes the ribose moiety from AdoMet to the 7-aminomethyl group of 7-deazaguanine (preQ1-tRNA) to give epoxyqueuosine (oQ-tRNA). The chain is S-adenosylmethionine:tRNA ribosyltransferase-isomerase from Mesorhizobium japonicum (strain LMG 29417 / CECT 9101 / MAFF 303099) (Mesorhizobium loti (strain MAFF 303099)).